The following is a 210-amino-acid chain: Transmembrane protein 61 (210 aa).

2 helical membrane-spanning segments follow: residues 18–38 (YCMT…FAWW) and 69–89 (VSFV…LWSV). The disordered stretch occupies residues 140–172 (VAEGPPTPPAYPTEEALEPSGSRDALLSTQPAW).

The protein resides in the membrane. This is Transmembrane protein 61 (TMEM61) from Homo sapiens (Human).